Reading from the N-terminus, the 563-residue chain is Rhotekin (563 aa).

Arginine 14 bears the Omega-N-methylarginine mark. The REM-1 domain maps to 17 to 98 (ALEMEFKRGR…LQRRKEAQVL (82 aa)). 2 positions are modified to phosphoserine: serine 30 and serine 106. The segment at 96–116 (QVLGKTSRRPSDSGPPAERSP) is disordered. Asymmetric dimethylarginine is present on arginine 230. Serine 232 bears the Phosphoserine mark. The 108-residue stretch at 309-416 (QPTASGTLRV…WMEALWQLFF (108 aa)) folds into the PH domain. The segment at 518–563 (TFSLDAVPPDHSPRARSVAPLPPQRSPRTRGLCSKGQPRTWLQSPV) is disordered. A phosphoserine mark is found at serine 520, serine 529, and serine 543.

Interacts via its C-terminal region with the TAX1BP3 PDZ domain. This interaction facilitates Rho-mediated activation of the c-Fos serum response element (SRE). Interacts with SEPT9. Specifically binds to GTP-bound RHOA, RHOB and RHOC and inhibits their GTPase activity. In terms of tissue distribution, highly expressed in prostate, moderately in kidney, heart, brain, spleen, testis, placenta, small intestine, pancreas, skeletal muscle and peripheral blood leukocytes, and weakly in ovary, colon and thymus. Weakly expressed in all normal cell lines tested. Overexpressed in various cancer cell lines.

Functionally, mediates Rho signaling to activate NF-kappa-B and may confer increased resistance to apoptosis to cells in gastric tumorigenesis. May play a novel role in the organization of septin structures. The polypeptide is Rhotekin (Homo sapiens (Human)).